We begin with the raw amino-acid sequence, 873 residues long: MNDAECLSHLLQVCARKTEEFVRTLDSKHMVWLLEIEEEARKMFSSDFNAEPELMPKTPSQKRRRKKRTSILPDENRDPSGRRISRRQSNASWSSSVRRLSVRNQNKANDDSIQEEPAQLKRMTRARAQASIKSTPVLETALPESPSQICQKNAQVKISEQERRSAEQKLIESDFELKTVPEITKDNVSETVNSAVPAVPVTPENKSRAAGKLKIAASSTPEQKAEMVDLTCESPRPANEQQLNLSNQSATPTGSKSDRRSVRRSLVVRKSSSRRASLASQFSLASKRESMTREAVRKSIRQSISQKKAAMEISSTSSQRSYQSSIEMVDDEITIKIRPETVPSETVSEEAPAAESPRRSLRSRAFKKIAISNLPDSEEPPRKVTRQMVAGNAEPTPETTEDAQNIRRKSYKRAVDELSDDERPSEEERSPPRKKTPSPPCPPSKIVRPPPHMKSFLHTVQKNQLLMMTPGSIGKNIIMKSFIKRNTPLKTDPKTEEKERQRLDALRKKEEAELQRKQKIEEGKKRKQEELKVRREERLRKVLQARERVEQLEEEKKKKIEQKFAQIDEKSEKVREDRMAEEKAKKKMTAKKQEEVECRRKQEEEARRLKVKQMEEEERRHQELLQKKREEEELERQKKIAEAKRLAEQERERQLLAEKERLRAEREKERIEKEKALQLQRELERAAQEKEQQRREAEERKKREQQERLEQERLRKEQEAKRLQEEEQRKAKEQAAVAASAPVMNVTVDMQNSPACESYEMTPKSCKVPSVKVNEDNYGMDLNSDDSTDDESQPRKPIPAWASGNLLTQAIRQQYYKPIDVDRMYGTIDSPKLEELFNKSKPRYFKRTSSAVWHSPPLSSNRHHLAVGYGLKY.

Disordered regions lie at residues 50–124 (AEPE…KRMT), 237–270 (PANE…VVRK), 282–452 (FSLA…PPPH), 484–535 (KRNT…KVRR), 566–649 (QIDE…LAEQ), 683–736 (LERA…EQAA), and 781–800 (DLNS…PIPA). A compositionally biased stretch (basic residues) spans 60–69 (SQKRRRKKRT). The span at 87 to 105 (RQSNASWSSSVRRLSVRNQ) shows a compositional bias: low complexity. Positions 239 to 254 (NEQQLNLSNQSATPTG) are enriched in polar residues. Basic residues predominate over residues 261–270 (SVRRSLVVRK). A compositionally biased stretch (basic and acidic residues) spans 286 to 297 (SKRESMTREAVR). Residues 314-325 (SSTSSQRSYQSS) are compositionally biased toward low complexity. Residues 437–452 (PSPPCPPSKIVRPPPH) are compositionally biased toward pro residues. 4 stretches are compositionally biased toward basic and acidic residues: residues 491 to 535 (TDPK…KVRR), 566 to 584 (QIDE…EEKA), 591 to 649 (KKQE…LAEQ), and 683 to 733 (LERA…KAKE). The segment at 494–707 (KTEEKERQRL…EERKKREQQE (214 aa)) is SAH. The tract at residues 782 to 856 (LNSDDSTDDE…RTSSAVWHSP (75 aa)) is IN box. Residues Ser849 and Ser850 each carry the phosphoserine modification.

It belongs to the INCENP family. In terms of assembly, component of the CPC composed of survivin/birc5, incenp, cdca8/borealin and/or cdca9/dasra-A, and aurkb/aurora-B. Interacts (via C-terminus) with aurkb (via N-terminus and kinase domain). Interacts (via N-terminus) with birc5.1, birc5.2, cdca8 and cdca9. Interacts with mtus1.

Its subcellular location is the nucleus. It is found in the chromosome. The protein localises to the centromere. The protein resides in the cytoplasm. It localises to the cytoskeleton. Its subcellular location is the spindle. It is found in the midbody. The protein localises to the kinetochore. Component of the chromosomal passenger complex (CPC), a complex that acts as a key regulator of mitosis. The CPC complex has essential functions at the centromere in ensuring correct chromosome alignment and segregation and is required for chromatin-induced microtubule stabilization and spindle assembly. Acts as a scaffold regulating CPC localization and activity. The C-terminus associates with aurkb/aurora-B, the N-terminus associated with cdca8/borealin and/or cdca9/dasra-A tethers the CPC to the inner centromere, and the microtubule binding activity within the central SAH domain directs aurkb/aurora-B toward substrates near microtubules. Activates aurkb. The sequence is that of Inner centromere protein A (incenp-a) from Xenopus laevis (African clawed frog).